Reading from the N-terminus, the 353-residue chain is Soluble interferon alpha/beta receptor OPG204 (353 aa).

The signal sequence occupies residues 1–21; sequence MTMKMMVHIYFVSLSLLLLLF. Ig-like C2-type domains follow at residues 67-139 and 157-239; these read LGEP…KNGD and PKTY…IVVS. 2 disulfides stabilise this stretch: cysteine 75/cysteine 131 and cysteine 174/cysteine 223. N-linked (GlcNAc...) asparagine; by host glycans are attached at residues asparagine 119, asparagine 184, asparagine 263, asparagine 271, and asparagine 323. Residues 248–347 form the Ig-like V-type domain; the sequence is PSQDHRFKLI…HNYYFEKTLT (100 aa). A disulfide bridge links cysteine 274 with cysteine 335.

Belongs to the interleukin-1 receptor family. In terms of assembly, interacts with host IFNA1.

The protein localises to the secreted. In terms of biological role, counteracts the antiviral effects of host IFN-alpha/beta and key IFN-inducible proteins involved in viral RNA degradation suxh as host OAS1. Acts as a soluble IFN-alpha receptor and thus inhibits the interaction between host IFN-alpha and its receptor. The sequence is that of Soluble interferon alpha/beta receptor OPG204 (OPG204) from Homo sapiens (Human).